The chain runs to 650 residues: Probable LIM domain-containing serine/threonine-protein kinase DDB_G0287001 (650 aa).

LIM zinc-binding domains lie at 4-63 and 64-122; these read NNCG…KLNA and RKCF…PSDK. Disordered stretches follow at residues 118 to 138, 171 to 197, and 293 to 320; these read KPSD…LPGK, LSSS…SSFM, and LLNS…NLNT. The span at 173 to 188 shows a compositional bias: gly residues; the sequence is SSGGSGNSISGSGGTN. In terms of domain architecture, Protein kinase spans 386–643; that stretch reads VAFGDVIASG…DTLKKISESL (258 aa). ATP contacts are provided by residues 392–400 and lysine 413; that span reads IASGASGKV. Aspartate 509 serves as the catalytic Proton acceptor.

Belongs to the protein kinase superfamily. TKL Ser/Thr protein kinase family.

It catalyses the reaction L-seryl-[protein] + ATP = O-phospho-L-seryl-[protein] + ADP + H(+). It carries out the reaction L-threonyl-[protein] + ATP = O-phospho-L-threonyl-[protein] + ADP + H(+). In Dictyostelium discoideum (Social amoeba), this protein is Probable LIM domain-containing serine/threonine-protein kinase DDB_G0287001.